Here is a 171-residue protein sequence, read N- to C-terminus: MEFPDLGKHCSEPTCKQLDFLPITCDACKQDFCKDHFSYVGHKCPFAFKKDVQVPVCPLCNAPIPVKRGEIPDVVVGEHMDRDCTFHPGRNRNKVFTHRCSKEGCRKKEMLQLACAQCHGNFCIQHRHPLDHNCQAGSSSASRGRTSTSRAAEQKPSGVSWLAQRLRRTVK.

AN1-type zinc fingers lie at residues P4 to V52 and K94 to S142. Zn(2+)-binding residues include C10, C15, C25, C28, C33, H36, H42, C44, C100, C105, C115, C118, C123, H126, H132, and C134. Residues C134–K171 are disordered. A compositionally biased stretch (low complexity) spans A136–A151.

The protein resides in the cytoplasm. The protein localises to the nucleus. This Mus musculus (Mouse) protein is AN1-type zinc finger protein 2A (Zfand2a).